We begin with the raw amino-acid sequence, 636 residues long: ABC transporter ATP-binding protein RamA (636 aa).

5 consecutive transmembrane segments (helical) span residues 45-65 (VLVL…PLAL), 78-98 (AGWW…LDSA), 175-195 (LVDV…ALLL), 269-289 (GVLV…RLAA), and 297-317 (LLAV…ASLL). The ABC transmembrane type-1 domain occupies 45–322 (VLVLLCSVAA…AASLLGAIVR (278 aa)). Positions 354–585 (LRLCGVRVLR…AGYREVFGAG (232 aa)) constitute an ABC transporter domain. 386-393 (GRSGAGKS) is an ATP binding site. Gly residues predominate over residues 589-606 (GAGAGAGAGADAGAGADA). The tract at residues 589 to 636 (GAGAGAGAGADAGAGADAGPGPDSGAATAVGGSGPGPVRRPEPEEARP) is disordered. The span at 607 to 618 (GPGPDSGAATAV) shows a compositional bias: low complexity. Residues 627-636 (RRPEPEEARP) show a composition bias toward basic and acidic residues.

The protein belongs to the ABC transporter superfamily.

The protein resides in the cell membrane. Functionally, probably involved in exporting SapB from the cell. Expression of the ram locus (ramA, ramB and ramR) induces rapid aerial mycelium formation in S.lividans. This is ABC transporter ATP-binding protein RamA from Streptomyces coelicolor (strain ATCC BAA-471 / A3(2) / M145).